Here is a 139-residue protein sequence, read N- to C-terminus: uncharacterized protein (139 aa).

Residues 43–59 (FGVISTLIAIFIGAFWL) form a helical membrane-spanning segment.

It localises to the membrane. This is an uncharacterized protein from Haemophilus influenzae (strain ATCC 51907 / DSM 11121 / KW20 / Rd).